The following is a 65-amino-acid chain: KappaPI-actitoxin-Ael3a (65 aa).

In terms of domain architecture, BPTI/Kunitz inhibitor spans 5-55 (CLLPKKQGFCRARFPRFYYNSSTRRCEMFYYGGCGGNANNFNTLEECEKVC). Intrachain disulfides connect C5–C55, C14–C38, and C30–C51.

This sequence belongs to the venom Kunitz-type family. Sea anemone type 2 potassium channel toxin subfamily.

It is found in the secreted. The protein resides in the nematocyst. Functionally, dual-function toxin that inhibits both serine proteases (trypsin Kd=124 nM) and voltage-gated potassium channels rKv1.1/KCNA1 (IC(50)=0.9 nM). The activity on the Kv1.1/KCNA1 is selective and reversible. The toxin presumably acts by blocking the channel pore in the open state. The chain is KappaPI-actitoxin-Ael3a from Anthopleura elegantissima (Green aggregating anemone).